A 42-amino-acid chain; its full sequence is Alpha-conotoxin VnIB (42 aa).

The propeptide occupies 1-22 (ASDGRNAAADDKASDPIALTVR). 2 cysteine pairs are disulfide-bonded: cysteine 25-cysteine 31 and cysteine 26-cysteine 38. Position 39 is a glycine amide (glycine 39).

This sequence belongs to the conotoxin A superfamily. Expressed by the venom duct.

It localises to the secreted. In terms of biological role, alpha-conotoxins act on postsynaptic membranes, they bind to the nicotinic acetylcholine receptors (nAChR) and thus inhibit them. This toxin potently and selectively inhibits human and rat alpha-6-beta-4/CHRNA6-CHRNB4 nAChR (IC(50)=12 nM on rat nAChR). It exhibits rapid binding and unbinding at this receptor. It also shows activity on rat alpha-6-beta-4/CHRNA6-CHRNB4 (IC(50)=12 nM), human alpha-6/alpha-3-beta-4 (CHRNA6/CHRNA3-CHRNB4) (IC(50)=5.3 nM), rat alpha-6/alpha-3-beta-4 (CHRNA6/CHRNA3-CHRNB4) (IC(50)=18 nM), rat alpha-3-beta-4/CHRNA3-CHRNB4 (IC(50)=320 nM), and rat alpha-6/alpha-3-beta-2-beta-3 (CHRNA6/CHRNA3-CHRNB2-CHRNB3) (IC(50)=4 uM). This is Alpha-conotoxin VnIB from Conus ventricosus (Mediterranean cone).